We begin with the raw amino-acid sequence, 176 residues long: Translation initiation factor IF-3 (176 aa).

This sequence belongs to the IF-3 family. As to quaternary structure, monomer.

The protein localises to the cytoplasm. Its function is as follows. IF-3 binds to the 30S ribosomal subunit and shifts the equilibrium between 70S ribosomes and their 50S and 30S subunits in favor of the free subunits, thus enhancing the availability of 30S subunits on which protein synthesis initiation begins. This is Translation initiation factor IF-3 from Wolinella succinogenes (strain ATCC 29543 / DSM 1740 / CCUG 13145 / JCM 31913 / LMG 7466 / NCTC 11488 / FDC 602W) (Vibrio succinogenes).